The sequence spans 171 residues: Putative RING finger protein 027R (171 aa).

The RING-type zinc finger occupies 121 to 163; the sequence is CAVCMTNPVWVDFVWSCKHISTCIKCLKMLSRGSNGFKCPICR.

The protein belongs to the IIV-6 157L family.

The sequence is that of Putative RING finger protein 027R from Aedes vexans (Inland floodwater mosquito).